The sequence spans 165 residues: Austinoid biosynthesis cluster protein J (165 aa).

This sequence belongs to the trt14 isomerase family. In terms of assembly, homodimer.

The protein operates within secondary metabolite biosynthesis; terpenoid biosynthesis. Its function is as follows. Part of the gene cluster that mediates the biosynthesis of calidodehydroaustin, a fungal meroterpenoid. The first step of the pathway is the synthesis of 3,5-dimethylorsellinic acid by the polyketide synthase ausA. 3,5-dimethylorsellinic acid is then prenylated by the polyprenyl transferase ausN. Further epoxidation by the FAD-dependent monooxygenase ausM and cyclization by the probable terpene cyclase ausL lead to the formation of protoaustinoid A. Protoaustinoid A is then oxidized to spiro-lactone preaustinoid A3 by the combined action of the FAD-binding monooxygenases ausB and ausC, and the dioxygenase ausE. Acid-catalyzed keto-rearrangement and ring contraction of the tetraketide portion of preaustinoid A3 by ausJ lead to the formation of preaustinoid A4. The aldo-keto reductase ausK, with the help of ausH, is involved in the next step by transforming preaustinoid A4 into isoaustinone which is in turn hydroxylated by the P450 monooxygenase ausI to form austinolide. The cytochrome P450 monooxygenase ausG modifies austinolide to austinol. Austinol is further acetylated to austin by the O-acetyltransferase ausP, which spontaneously changes to dehydroaustin. The cytochrome P450 monooxygenase ausR then converts dehydroaustin is into 7-dehydrodehydroaustin. The hydroxylation catalyzed by ausR permits the O-acetyltransferase ausQ to add an additional acetyl group to the molecule, leading to the formation of acetoxydehydroaustin. The short chain dehydrogenase ausT catalyzes the reduction of the double bond present between carbon atoms 1 and 2 to convert 7-dehydrodehydroaustin into 1,2-dihydro-7-hydroxydehydroaustin. AusQ catalyzes not only an acetylation reaction but also the addition of the PKS ausV diketide product to 1,2-dihydro-7-hydroxydehydroaustin, forming precalidodehydroaustin. Finally, the iron/alpha-ketoglutarate-dependent dioxygenase converts precalidodehydroaustin into calidodehydroaustin. This is Austinoid biosynthesis cluster protein J from Aspergillus calidoustus.